An 86-amino-acid polypeptide reads, in one-letter code: MeuNaTxbeta-1 (86 aa).

A signal peptide spans 1-20 (MMKIIIFLIVSSLVLIGVKT). The region spanning 21–83 (DNGYLLDKYT…LWHYETNKCN (63 aa)) is the LCN-type CS-alpha/beta domain. 4 disulfides stabilise this stretch: C32-C82, C36-C57, C43-C64, and C47-C66.

As to expression, expressed by the venom gland.

The protein localises to the secreted. Inhibits sodium channels (Nav). Also moderately inhibits human calcium-activated potassium channel KCa1.1/KCNMA1/BK (41.9% decrease at 2 uM toxin concentration). Shows moderate antimicrobial activity against both Gram-positive and -negative bacteria. The chain is MeuNaTxbeta-1 from Mesobuthus eupeus (Lesser Asian scorpion).